We begin with the raw amino-acid sequence, 300 residues long: 4-hydroxybenzoate octaprenyltransferase (300 aa).

8 helical membrane passes run 32-52 (IGTY…SEGA), 55-75 (LKNL…GCVI), 108-128 (LFGI…ALTI), 149-169 (YLPQ…AFAA), 178-198 (AWLL…MYAM), 222-242 (AAVA…GAQH), 246-266 (VYYQ…QHLI), and 278-298 (FLNN…EFLF).

The protein belongs to the UbiA prenyltransferase family. Mg(2+) serves as cofactor.

The protein localises to the cell inner membrane. It catalyses the reaction all-trans-octaprenyl diphosphate + 4-hydroxybenzoate = 4-hydroxy-3-(all-trans-octaprenyl)benzoate + diphosphate. It participates in cofactor biosynthesis; ubiquinone biosynthesis. Its function is as follows. Catalyzes the prenylation of para-hydroxybenzoate (PHB) with an all-trans polyprenyl group. Mediates the second step in the final reaction sequence of ubiquinone-8 (UQ-8) biosynthesis, which is the condensation of the polyisoprenoid side chain with PHB, generating the first membrane-bound Q intermediate 3-octaprenyl-4-hydroxybenzoate. This is 4-hydroxybenzoate octaprenyltransferase from Hahella chejuensis (strain KCTC 2396).